The following is a 291-amino-acid chain: Ribose-phosphate pyrophosphokinase (291 aa).

ATP contacts are provided by residues D34–E36 and R93–Q94. Residues H127 and D165 each contribute to the Mg(2+) site. K188 is a catalytic residue. Residues R190, D216, and S220–T224 contribute to the D-ribose 5-phosphate site.

This sequence belongs to the ribose-phosphate pyrophosphokinase family. Class III (archaeal) subfamily. The cofactor is Mg(2+).

The protein localises to the cytoplasm. The catalysed reaction is D-ribose 5-phosphate + ATP = 5-phospho-alpha-D-ribose 1-diphosphate + AMP + H(+). The protein operates within metabolic intermediate biosynthesis; 5-phospho-alpha-D-ribose 1-diphosphate biosynthesis; 5-phospho-alpha-D-ribose 1-diphosphate from D-ribose 5-phosphate (route I): step 1/1. Involved in the biosynthesis of the central metabolite phospho-alpha-D-ribosyl-1-pyrophosphate (PRPP) via the transfer of pyrophosphoryl group from ATP to 1-hydroxyl of ribose-5-phosphate (Rib-5-P). The sequence is that of Ribose-phosphate pyrophosphokinase from Sulfolobus acidocaldarius (strain ATCC 33909 / DSM 639 / JCM 8929 / NBRC 15157 / NCIMB 11770).